The chain runs to 225 residues: UPF0758 protein BAMEG_4721 (225 aa).

In terms of domain architecture, MPN spans 103–225; it reads SIRSPEDCAT…FVSLKEKGHI (123 aa). Positions 174, 176, and 187 each coordinate Zn(2+). The JAMM motif signature appears at 174–187; sequence HNHPSGDPAPSRED.

This sequence belongs to the UPF0758 family.

In Bacillus anthracis (strain CDC 684 / NRRL 3495), this protein is UPF0758 protein BAMEG_4721.